The sequence spans 137 residues: Prostate and testis expressed protein 13 (137 aa).

The N-terminal stretch at 1–20 is a signal peptide; that stretch reads MFQKLLLSVFIILLMDVGER. The region spanning 28–114 is the UPAR/Ly6 domain; that stretch reads RHCNLCSHYD…CIDRNYCNDG (87 aa). Intrachain disulfides connect C30-C60, C33-C41, C48-C84, C87-C104, and C105-C111. The N-linked (GlcNAc...) asparagine glycan is linked to N57.

Belongs to the PATE family. As to expression, strongly expressed in the epididymis, including the initial segment, caput, corpus and cauda regions. Weakly expressed in prostate.

Its subcellular location is the secreted. The polypeptide is Prostate and testis expressed protein 13 (Mus musculus (Mouse)).